Consider the following 236-residue polypeptide: Purine nucleoside phosphorylase DeoD-type (236 aa).

Residue His-5 participates in a purine D-ribonucleoside binding. Residues Gly-21, Arg-25, Arg-44, and 88–91 (RIGS) contribute to the phosphate site. Residues 180-182 (EME) and 204-205 (SD) each bind a purine D-ribonucleoside. Asp-205 serves as the catalytic Proton donor.

It belongs to the PNP/UDP phosphorylase family. As to quaternary structure, homohexamer; trimer of homodimers.

It carries out the reaction a purine D-ribonucleoside + phosphate = a purine nucleobase + alpha-D-ribose 1-phosphate. The catalysed reaction is a purine 2'-deoxy-D-ribonucleoside + phosphate = a purine nucleobase + 2-deoxy-alpha-D-ribose 1-phosphate. Its function is as follows. Catalyzes the reversible phosphorolytic breakdown of the N-glycosidic bond in the beta-(deoxy)ribonucleoside molecules, with the formation of the corresponding free purine bases and pentose-1-phosphate. This chain is Purine nucleoside phosphorylase DeoD-type, found in Tolumonas auensis (strain DSM 9187 / NBRC 110442 / TA 4).